The following is a 570-amino-acid chain: Protein NRT1/ PTR FAMILY 8.1 (570 aa).

Phosphothreonine is present on Thr98. 10 helical membrane passes run 99 to 119, 140 to 160, 182 to 202, 210 to 230, 329 to 349, 377 to 397, 414 to 434, 454 to 474, 494 to 514, and 537 to 557; these read IATFVFIYVSGMTLLTLSASV, AVFFVALYMIALGTGGIKPCV, FFNWFYFSINVGALIAATVLV, WGWGFGVPTVAMVIAVCFFFF, IITLLPVWATGIVFATVYSQM, LFDTVSVLFWTPVYDQFIIPL, MGIGLVVSIFAMITAGVLEVV, IFWQIPQYLLIGCAEVFTFIG, LSLTTVALGNYLSTVLVTVVM, and YFFYLLATLSFLNFLVYLWIS.

It belongs to the major facilitator superfamily. Proton-dependent oligopeptide transporter (POT/PTR) (TC 2.A.17) family. Expressed in cotyledons, hypocotyls, leaves, roots, flowers, pistils and vascular tissue of sepals, anthers, carpels and funiculi. Not detected in seeds.

It localises to the cell membrane. In terms of biological role, peptide transporter. Mediates the transport of di- and tripeptides. High affinity transporter with low selectivity. No transport of amino acids. This is Protein NRT1/ PTR FAMILY 8.1 (NPF8.1) from Arabidopsis thaliana (Mouse-ear cress).